The primary structure comprises 374 residues: Chaperone protein DnaJ (374 aa).

Positions 4–69 constitute a J domain; it reads DFYETLCVSR…QKRAAYDRFG (66 aa). The CR-type zinc-finger motif lies at 131 to 210; it reads GKTAQIRVPT…CSGQGRLTEE (80 aa). The Zn(2+) site is built by Cys-144, Cys-147, Cys-161, Cys-164, Cys-184, Cys-187, Cys-198, and Cys-201. CXXCXGXG motif repeat units lie at residues 144 to 151, 161 to 168, 184 to 191, and 198 to 205; these read CDECAGSG, CPMCHGAG, CPQCQGRG, and CRKCSGQG.

The protein belongs to the DnaJ family. Homodimer. Requires Zn(2+) as cofactor.

It localises to the cytoplasm. Participates actively in the response to hyperosmotic and heat shock by preventing the aggregation of stress-denatured proteins and by disaggregating proteins, also in an autonomous, DnaK-independent fashion. Unfolded proteins bind initially to DnaJ; upon interaction with the DnaJ-bound protein, DnaK hydrolyzes its bound ATP, resulting in the formation of a stable complex. GrpE releases ADP from DnaK; ATP binding to DnaK triggers the release of the substrate protein, thus completing the reaction cycle. Several rounds of ATP-dependent interactions between DnaJ, DnaK and GrpE are required for fully efficient folding. Also involved, together with DnaK and GrpE, in the DNA replication of plasmids through activation of initiation proteins. This Chelativorans sp. (strain BNC1) protein is Chaperone protein DnaJ.